The chain runs to 171 residues: Cytochrome c oxidase subunit 5b-2, mitochondrial (171 aa).

Residues 1–54 (MWRRIVSSHLKSISAVGSCAAPSCRHAVVESTHLSLSTRASSIPAYSSIFSRLI) constitute a mitochondrion transit peptide. Zn(2+)-binding residues include C121, C145, and C148.

This sequence belongs to the cytochrome c oxidase subunit 5B (TC 3.D.4.11) family.

The protein localises to the mitochondrion inner membrane. This protein is one of the nuclear-coded polypeptide chains of cytochrome c oxidase, the terminal oxidase in mitochondrial electron transport. In Arabidopsis thaliana (Mouse-ear cress), this protein is Cytochrome c oxidase subunit 5b-2, mitochondrial (COX5B-2).